Here is a 441-residue protein sequence, read N- to C-terminus: C-terminal-binding protein 1 (441 aa).

The segment at 1–70 is interaction with GLIS2 1; sequence MGSSHLLNKG…EIHEKVLNEA (70 aa). NAD(+) contacts are provided by residues S100, 180–185, D204, 237–243, 264–266, and D290; these read IGLGRV, CGLNEHN, and TAR. R266 is an active-site residue. Residues 288 to 360 form an interaction with GLIS2 2 region; it reads ALDVHESEPF…VNKDHLTAAT (73 aa). The active site involves E295. S300 is modified (phosphoserine). The active-site Proton donor is H315. Residue 315–318 coordinates NAD(+); the sequence is HAAW. The segment at 409–441 is disordered; it reads SHGLPPVAHPPHAPSPGQTVKPEADRDHTSDQL. Residue S423 is modified to Phosphoserine. Residue K429 forms a Glycyl lysine isopeptide (Lys-Gly) (interchain with G-Cter in SUMO) linkage. The segment covering 430–441 has biased composition (basic and acidic residues); that stretch reads PEADRDHTSDQL.

Belongs to the D-isomer specific 2-hydroxyacid dehydrogenase family. As to quaternary structure, homo- or heterodimer. Heterodimer with CTBP2. Interacts with ELK3 (via its PXDLS motif). Interacts with RBBP8 (via its PXDLS motif). Interacts with PNN, MECOM and ZFHX1B. Interacts with ZNF366 (via PXDLS motif). Interaction with SATB1 (non-acetylated form); the interaction stabilizes its attachment to DNA and promotes transcription repression. Interacts with PRDM16; the interaction represses white adipose tissue (WAT)-specific genes expression. Interacts with GLIS2, HIPK2, FOXP1, FOXP2, HDAC4, HDAC5, HDAC9, NRIP1, WIZ and ZNF217. Interacts with BCL6; the interaction is required for BCL6 transcriptional autoinhibition and inhibition of some BCL6 target genes. Interacts with IKZF4. Interacts with MCRIP1 (unphosphorylated form, via the PXDLS motif); competitively inhibiting CTBP-ZEB1 interaction. Interacts with Bassoon/BSN; this interaction targets and anchors CTBP1 to presynapses. Interacts with SIMC1. NAD(+) serves as cofactor. ADP-ribosylated; when cells are exposed to brefeldin A. In terms of processing, the level of phosphorylation appears to be regulated during the cell cycle. Phosphorylation by HIPK2 on Ser-423 induces proteasomal degradation. Post-translationally, sumoylation on Lys-429 is promoted by the E3 SUMO-protein ligase CBX4. As to expression, expressed in a wide range of adult tissues.

Its subcellular location is the cytoplasm. It localises to the nucleus. Functionally, corepressor targeting diverse transcription regulators such as GLIS2 or BCL6. Has dehydrogenase activity. Involved in controlling the equilibrium between tubular and stacked structures in the Golgi complex. Functions in brown adipose tissue (BAT) differentiation. This chain is C-terminal-binding protein 1 (Ctbp1), found in Mus musculus (Mouse).